Here is a 466-residue protein sequence, read N- to C-terminus: Cysteine--tRNA ligase (466 aa).

C29 contributes to the Zn(2+) binding site. A 'HIGH' region motif is present at residues 31 to 41 (ATVQAAPHIGH). The Zn(2+) site is built by C208, H233, and E237. The short motif at 264–268 (KMSKS) is the 'KMSKS' region element. ATP is bound at residue K267.

This sequence belongs to the class-I aminoacyl-tRNA synthetase family. As to quaternary structure, monomer. It depends on Zn(2+) as a cofactor.

It localises to the cytoplasm. The catalysed reaction is tRNA(Cys) + L-cysteine + ATP = L-cysteinyl-tRNA(Cys) + AMP + diphosphate. The sequence is that of Cysteine--tRNA ligase from Streptomyces avermitilis (strain ATCC 31267 / DSM 46492 / JCM 5070 / NBRC 14893 / NCIMB 12804 / NRRL 8165 / MA-4680).